The chain runs to 163 residues: Thiol peroxidase (163 aa).

Positions 16-162 constitute a Thioredoxin domain; sequence LQVGDKALDF…FEAAIAAAKA (147 aa). The active-site Cysteine sulfenic acid (-SOH) intermediate is C58. A disulfide bridge connects residues C58 and C92.

It belongs to the peroxiredoxin family. Tpx subfamily. As to quaternary structure, homodimer.

The catalysed reaction is a hydroperoxide + [thioredoxin]-dithiol = an alcohol + [thioredoxin]-disulfide + H2O. Its function is as follows. Thiol-specific peroxidase that catalyzes the reduction of hydrogen peroxide and organic hydroperoxides to water and alcohols, respectively. Plays a role in cell protection against oxidative stress by detoxifying peroxides. In Streptococcus pneumoniae serotype 2 (strain D39 / NCTC 7466), this protein is Thiol peroxidase.